We begin with the raw amino-acid sequence, 398 residues long: Subtilisin-like protease CPC735_015300 (398 aa).

The N-terminal stretch at 1–19 (MGFIKTLSLSLAAASAANA) is a signal peptide. The propeptide occupies 20 to 116 (AKILSPSRPD…IEHDHVVRLT (97 aa)). The Inhibitor I9 domain occupies 35–115 (QYIVVMKDGV…FIEHDHVVRL (81 aa)). Positions 126–398 (TWGLGRVSHQ…NKLTYNGNGQ (273 aa)) constitute a Peptidase S8 domain. Residues Asp-158 and His-189 each act as charge relay system in the active site. An N-linked (GlcNAc...) asparagine glycan is attached at Asn-250. The active-site Charge relay system is the Ser-344. Asn-362 is a glycosylation site (N-linked (GlcNAc...) asparagine).

This sequence belongs to the peptidase S8 family.

The protein localises to the secreted. In terms of biological role, secreted subtilisin-like serine protease with keratinolytic activity that contributes to pathogenicity. The sequence is that of Subtilisin-like protease CPC735_015300 from Coccidioides posadasii (strain C735) (Valley fever fungus).